A 202-amino-acid chain; its full sequence is Ribosome maturation factor RimM (202 aa).

The region spanning Ala-100–Leu-195 is the PRC barrel domain.

The protein belongs to the RimM family. Binds ribosomal protein uS19.

The protein localises to the cytoplasm. In terms of biological role, an accessory protein needed during the final step in the assembly of 30S ribosomal subunit, possibly for assembly of the head region. Essential for efficient processing of 16S rRNA. May be needed both before and after RbfA during the maturation of 16S rRNA. It has affinity for free ribosomal 30S subunits but not for 70S ribosomes. This is Ribosome maturation factor RimM from Bifidobacterium longum (strain NCC 2705).